The primary structure comprises 396 residues: NADH-quinone oxidoreductase subunit D (396 aa).

It belongs to the complex I 49 kDa subunit family. NDH-1 is composed of 14 different subunits. Subunits NuoB, C, D, E, F, and G constitute the peripheral sector of the complex.

The protein localises to the cell inner membrane. It catalyses the reaction a quinone + NADH + 5 H(+)(in) = a quinol + NAD(+) + 4 H(+)(out). Its function is as follows. NDH-1 shuttles electrons from NADH, via FMN and iron-sulfur (Fe-S) centers, to quinones in the respiratory chain. The immediate electron acceptor for the enzyme in this species is believed to be ubiquinone. Couples the redox reaction to proton translocation (for every two electrons transferred, four hydrogen ions are translocated across the cytoplasmic membrane), and thus conserves the redox energy in a proton gradient. The protein is NADH-quinone oxidoreductase subunit D of Agrobacterium fabrum (strain C58 / ATCC 33970) (Agrobacterium tumefaciens (strain C58)).